A 423-amino-acid chain; its full sequence is MAVEDDVSLIRTTTLVAPTRPTITVPHRPPAIETAAYFFGGGDGLSLSPGPLSFVSSLFVDNFPDVLTPDNQRTTSFTHLLTSPMFFPPQSSAHTGFIQPRQQSQPQPQRPDTFPHHMPPSTSVAVHGRQSLDVSQVDQRARNHYNNPGNNNNNRSYNVVNVDKPADDGYNWRKYGQKPIKGCEYPRSYYKCTHVNCPVKKKVERSSDGQITQIIYKGQHDHERPQNRRGGGGRDSTEVGGAGQMMESSDDSGYRKDHDDDDDDDEDDEDLPASKIRRIDGVSTTHRTVTEPKIIVQTKSEVDLLDDGYRWRKYGQKVVKGNPHPRSYYKCTTPNCTVRKHVERASTDAKAVITTYEGKHNHDVPAARNGTAAATAAAVGPSDHHRMRSMSGNNMQQHMSFGNNNNTGQSPVLLRLKEEKITI.

3 disordered regions span residues 91-128, 142-171, and 215-284; these read SSAH…AVHG, RNHY…DGYN, and IYKG…GVST. Low complexity-rich tracts occupy residues 99–111 and 144–162; these read QPRQ…PQRP and HYNN…VVNV. The WRKY 1 DNA-binding region spans 161–225; sequence NVDKPADDGY…YKGQHDHERP (65 aa). Over residues 259 to 271 the composition is skewed to acidic residues; sequence DDDDDDDEDDEDL. Residues 300–365 constitute a DNA-binding region (WRKY 2); the sequence is SEVDLLDDGY…YEGKHNHDVP (66 aa).

It localises to the nucleus. Transcription factor. Interacts specifically with the W box (5'-(T)TGAC[CT]-3'), a frequently occurring elicitor-responsive cis-acting element. The protein is Probable WRKY transcription factor 58 (WRKY58) of Arabidopsis thaliana (Mouse-ear cress).